The sequence spans 27 residues: NLLQFGFMIRCANKRRRPVWPYEESGC.

Belongs to the phospholipase A2 family. Group I subfamily. Heterotrimer of alpha, beta and gamma chains, each related to PLA2. The cofactor is Ca(2+). In terms of tissue distribution, expressed by the venom gland.

It is found in the secreted. The enzyme catalyses a 1,2-diacyl-sn-glycero-3-phosphocholine + H2O = a 1-acyl-sn-glycero-3-phosphocholine + a fatty acid + H(+). Its function is as follows. Heterotrimer: presynaptic neurotoxin. Inhibits nerve-evoked twitch contractions but not responses to cholinergic agonists acetylcholine and carbachol and to depolarizing agonist KCl. Causes a fade in tetanic contractions. Displays a triphasic mode of action with depression, enhancement and blockade of neurotransmission. Does not display myotoxic activity such as changes in baseline muscle tension or inhibition of directly stimulated muscle twitches. All subunits are necessary for maximum toxicity. Monomer: Snake venom phospholipase A2 (PLA2) alpha chain that has enzymatic activity. PLA2 catalyzes the calcium-dependent hydrolysis of the 2-acyl groups in 3-sn-phosphoglycerides. This Acanthophis antarcticus (Common death adder) protein is Phospholipase A2 P-elapitoxin-Aa1a alpha chain.